The chain runs to 448 residues: Gametocyte surface protein P45/48 (448 aa).

An N-terminal signal peptide occupies residues 1–27; that stretch reads MMLYISAKKAQVAFILYIVLVLRIISG. A 6-Cys 1 domain is found at 45-182; the sequence is IGYKCNFSNE…AMVHVRVLKY (138 aa). Disulfide bonds link C49/C71 and C102/C156. N50, N131, N190, N204, N254, N299, and N303 each carry an N-linked (GlcNAc...) asparagine glycan. In terms of domain architecture, 6-Cys 2 spans 294–426; that stretch reads VIHGCNFSSN…KSAYMTVTID (133 aa). Disulfide bonds link C298–C327, C344–C412, and C352–C410. Residue D426 is the site of GPI-anchor amidated aspartate attachment. Positions 427–448 are cleaved as a propeptide — removed in mature form; it reads SAYYGFLAKTFIFLIVAILLYI.

In terms of assembly, heterodimer; heterodimerizes with PF230.

It localises to the cell surface. The protein resides in the cell membrane. In terms of biological role, gametocyte surface protein required for male fertility. The sequence is that of Gametocyte surface protein P45/48 (PF45/48) from Plasmodium falciparum (isolate 3D7).